A 105-amino-acid polypeptide reads, in one-letter code: U1-sicaritoxin-Li1b (105 aa).

An N-terminal signal peptide occupies residues 1–19 (MKLLFEGLLVLVLIAFVVA). The propeptide occupies 20 to 36 (EFESDAEKWEALITQER). 4 disulfides stabilise this stretch: C38–C55, C46–C60, C54–C73, and C62–C71. Arginine amide is present on R82. Residues 86–105 (ALMVDPETHRMLSLHRLSEE) constitute a propeptide that is removed on maturation.

The protein belongs to the neurotoxin 28 (Litx) family. As to expression, expressed by the venom gland.

The protein resides in the secreted. Its function is as follows. Toxin active against insects (S.frugiperda larvae). May act on sodium (Nav) or calcium (Cav) channels. The protein is U1-sicaritoxin-Li1b of Loxosceles intermedia (Brown spider).